A 437-amino-acid polypeptide reads, in one-letter code: Trigger factor (437 aa).

The 86-residue stretch at 164–249 (GDFAKFDFEG…LHEIQCKKIG (86 aa)) folds into the PPIase FKBP-type domain.

It belongs to the FKBP-type PPIase family. Tig subfamily.

It is found in the cytoplasm. The catalysed reaction is [protein]-peptidylproline (omega=180) = [protein]-peptidylproline (omega=0). Functionally, involved in protein export. Acts as a chaperone by maintaining the newly synthesized protein in an open conformation. Functions as a peptidyl-prolyl cis-trans isomerase. This Campylobacter hominis (strain ATCC BAA-381 / DSM 21671 / CCUG 45161 / LMG 19568 / NCTC 13146 / CH001A) protein is Trigger factor.